A 413-amino-acid chain; its full sequence is MSVAVSPLAPKSYPDMPALRGVRMATAAAGIKYKNRTDVLLMVFDKPASVAGVFTKSKCPSAPVDFCRANLGSGAARAVVVNSGNANAFTGVKGKAATELTAKSAAAAVGCSEGEIFLASTGVIGEPLDASKFAGVLGDMNVRAEADFWQEAAKAIMTTDTYPKVSTRTAEIGGVIVTINGISKGAGMIAPDMATMLSFVVTDADIEPAALQSLLSAGVGPTFNSVTVDSDTSTSDTLMLFATGAAAEDGQVKVTSADDERLSSFRAALNDLLKDLALQVVRDGEGARKMVEVTVTGAENDAAAKKIALSIANSPLVKTAVAGEDANWGRVVMAVGKSGEMADRDRLAIWFGGVRVAVNGERDPDYSEAETTAVMRLEDITVKVDIGLGQGTATVWTCDLTKEYVAINGDYRS.

Positions 158, 184, 195, 285, 408, and 413 each coordinate substrate. The Nucleophile role is filled by T195.

It belongs to the ArgJ family. Heterotetramer of two alpha and two beta chains.

It localises to the cytoplasm. It carries out the reaction N(2)-acetyl-L-ornithine + L-glutamate = N-acetyl-L-glutamate + L-ornithine. It catalyses the reaction L-glutamate + acetyl-CoA = N-acetyl-L-glutamate + CoA + H(+). Its pathway is amino-acid biosynthesis; L-arginine biosynthesis; L-ornithine and N-acetyl-L-glutamate from L-glutamate and N(2)-acetyl-L-ornithine (cyclic): step 1/1. The protein operates within amino-acid biosynthesis; L-arginine biosynthesis; N(2)-acetyl-L-ornithine from L-glutamate: step 1/4. Catalyzes two activities which are involved in the cyclic version of arginine biosynthesis: the synthesis of N-acetylglutamate from glutamate and acetyl-CoA as the acetyl donor, and of ornithine by transacetylation between N(2)-acetylornithine and glutamate. This chain is Arginine biosynthesis bifunctional protein ArgJ, found in Agrobacterium fabrum (strain C58 / ATCC 33970) (Agrobacterium tumefaciens (strain C58)).